The sequence spans 469 residues: MSQFLTEDFLLDTEFARRLYHDYAKDQPIFDYHCHLPPEQIAENYRFKNMYDIWLKGDHYKWRAMRTNGVAERLCTGDASDREKFDAWAATVPHTIGNPLYHWTHLELRRPFGITGKLLSPATSEEIWQRGNELLAQDPFSARGIMQQMNVKMVGTTDDPIDDLRHHKAIAADGSFNIKVLPSWRPDKAFNIEAAGFNDYMQRLEAAADTSISRFADLCVALNKRMDHFAAHGCKVSDHALDVVVYGEADETTLDAILARRLAGNQPSTEEIAQFKTAVLLFLSGEYHRREWVQQYHIGALRNNNSRMFNLVGPDIGFDSINDQPLAQPLSRLLDAQGLRNALPKTILYCLNPRDNEVIGTMVGNFQGEGEAGKMQFGSGWWFNDQKDGMQRQMTQLAQLGLLSRFVGMLTDSRSFLSYTRHEYFRRILCQMIGRWVADGEAPADIALLGAMVKNICFDNAQQYFAIEL.

This sequence belongs to the metallo-dependent hydrolases superfamily. Uronate isomerase family.

It carries out the reaction D-glucuronate = D-fructuronate. The catalysed reaction is aldehydo-D-galacturonate = keto-D-tagaturonate. It participates in carbohydrate metabolism; pentose and glucuronate interconversion. The polypeptide is Uronate isomerase (Yersinia pseudotuberculosis serotype O:1b (strain IP 31758)).